Reading from the N-terminus, the 395-residue chain is Succinyl-diaminopimelate desuccinylase (395 aa).

His-74 is a binding site for Zn(2+). Asp-76 is a catalytic residue. A Zn(2+)-binding site is contributed by Asp-107. The active-site Proton acceptor is the Glu-141. Glu-142, Glu-170, and His-368 together coordinate Zn(2+).

This sequence belongs to the peptidase M20A family. DapE subfamily. In terms of assembly, homodimer. Zn(2+) is required as a cofactor. Requires Co(2+) as cofactor.

It catalyses the reaction N-succinyl-(2S,6S)-2,6-diaminopimelate + H2O = (2S,6S)-2,6-diaminopimelate + succinate. Its pathway is amino-acid biosynthesis; L-lysine biosynthesis via DAP pathway; LL-2,6-diaminopimelate from (S)-tetrahydrodipicolinate (succinylase route): step 3/3. Functionally, catalyzes the hydrolysis of N-succinyl-L,L-diaminopimelic acid (SDAP), forming succinate and LL-2,6-diaminopimelate (DAP), an intermediate involved in the bacterial biosynthesis of lysine and meso-diaminopimelic acid, an essential component of bacterial cell walls. This chain is Succinyl-diaminopimelate desuccinylase, found in Brucella anthropi (strain ATCC 49188 / DSM 6882 / CCUG 24695 / JCM 21032 / LMG 3331 / NBRC 15819 / NCTC 12168 / Alc 37) (Ochrobactrum anthropi).